A 132-amino-acid polypeptide reads, in one-letter code: Cytochrome c-554 (132 aa).

Residues 1 to 24 form the signal peptide; that stretch reads MKSISMLTLAASVAFAVTAGQAVA. The region spanning 26–126 is the Cytochrome c domain; sequence GDPAAGEKVF…NVWAYLSQFG (101 aa). Heme c-binding residues include cysteine 38, cysteine 41, histidine 42, and methionine 104.

Post-translationally, binds 1 heme c group covalently per subunit.

Its subcellular location is the periplasm. The sequence is that of Cytochrome c-554 from Methylosinus trichosporium.